A 126-amino-acid chain; its full sequence is Protein ApaG (126 aa).

An ApaG domain is found at 2–126 (SDPRYQIDVS…FRLAVPGALH (125 aa)).

The sequence is that of Protein ApaG from Pseudomonas putida (strain W619).